Here is a 26-residue protein sequence, read N- to C-terminus: Guentherin (26 aa).

Expressed by the skin glands.

It localises to the secreted. Functionally, antimicrobial peptide. Active against the Gram-positive bacteria S.aureus FDA209P (MIC=35.5 ug/ml) and B.subtilis ATCC 6633 (MIC&gt;64 ug/ml), but not active against the Gram-negative bacterium E.coli or the fungus C.albicans. In Sylvirana guentheri (Gunther's frog), this protein is Guentherin.